The primary structure comprises 624 residues: Chaperone protein DnaK (624 aa).

Thr-174 is modified (phosphothreonine; by autocatalysis). 2 disordered regions span residues 544–563 (KKAQQENNLDDMKQKRDDLS) and 576–624 (NAQK…DDKK). The segment covering 581-600 (QQAQGGPASGAATDAGAAQG) has biased composition (low complexity). The span at 601–624 (SDDKKSDDDTINGDYKDVSDDDKK) shows a compositional bias: basic and acidic residues.

The protein belongs to the heat shock protein 70 family.

Its function is as follows. Acts as a chaperone. In Lacticaseibacillus casei (strain BL23) (Lactobacillus casei), this protein is Chaperone protein DnaK.